The primary structure comprises 92 residues: UPF0223 protein SSP1692 (92 aa).

The protein belongs to the UPF0223 family.

The protein is UPF0223 protein SSP1692 of Staphylococcus saprophyticus subsp. saprophyticus (strain ATCC 15305 / DSM 20229 / NCIMB 8711 / NCTC 7292 / S-41).